Reading from the N-terminus, the 306-residue chain is Curved DNA-binding protein (306 aa).

Residues 5–69 enclose the J domain; it reads DYYAIMGVKP…QRRAEYDQLW (65 aa).

The protein resides in the cytoplasm. It localises to the nucleoid. Its function is as follows. DNA-binding protein that preferentially recognizes a curved DNA sequence. It is probably a functional analog of DnaJ; displays overlapping activities with DnaJ, but functions under different conditions, probably acting as a molecular chaperone in an adaptive response to environmental stresses other than heat shock. Lacks autonomous chaperone activity; binds native substrates and targets them for recognition by DnaK. Its activity is inhibited by the binding of CbpM. The sequence is that of Curved DNA-binding protein from Salmonella arizonae (strain ATCC BAA-731 / CDC346-86 / RSK2980).